We begin with the raw amino-acid sequence, 1131 residues long: Replication factor C subunit 1 (1131 aa).

4 disordered regions span residues 14–87, 92–111, 120–201, and 225–378; these read KKPV…KSEK, YKPG…ETDE, AASK…NDEA, and ARTL…NYQA. Basic and acidic residues predominate over residues 38 to 54; the sequence is GVKEAKVNNSGKEDASK. Residue K49 forms a Glycyl lysine isopeptide (Lys-Gly) (interchain with G-Cter in SUMO2) linkage. Y66 bears the Phosphotyrosine mark. Phosphoserine is present on residues S68, S70, S72, and S107. T109 is subject to Phosphothreonine. Over residues 127-138 the composition is skewed to polar residues; sequence NGVSTNSYLGTS. S155 carries the post-translational modification Phosphoserine. Phosphothreonine is present on residues T160 and T162. A phosphoserine mark is found at S163, S172, S189, S244, S250, S253, S281, and S309. The segment covering 184-201 has biased composition (basic and acidic residues); it reads KRKESSQNTEDSRLNDEA. Over residues 308 to 319 the composition is skewed to low complexity; the sequence is SSPKASAKLALM. Composition is skewed to basic and acidic residues over residues 334–350 and 359–373; these read AARR…EKTT and TKRE…EKKR. Residues 354 to 528 form an interferon-stimulated-response-element binding region region; sequence TKVSPTKRES…KKESESKKCK (175 aa). The residue at position 365 (S365) is a Phosphoserine. The BRCT domain occupies 399–489; the sequence is GAENCLEGLT…PGKRSKYEMA (91 aa). The disordered stretch occupies residues 491 to 525; that stretch reads EAEMKKEKSKLERTPQKNDQGKRKISPAKKESESK. S535 carries the post-translational modification Phosphoserine. 635 to 642 contacts ATP; that stretch reads GPPGVGKT. Residues 1073–1131 form a disordered region; sequence PALDSEYSEEFQEDDTQSEKEQDAVETDAMIKKKTRSSKPSKSEREKESKKGKGKNWKK. Residues 1078–1088 are compositionally biased toward acidic residues; the sequence is EYSEEFQEDDT. S1090 is subject to Phosphoserine. Residues 1104-1108 carry the Nuclear localization signal motif; the sequence is KKKTR. Residues 1113 to 1123 show a composition bias toward basic and acidic residues; the sequence is SKSEREKESKK.

It belongs to the activator 1 large subunit family. Large subunit of the RFC complex, an heteropentameric complex consisting of RFC1 and four small subunits RFC2, RFC3, RFC4 and RFC5; the RFC complex interacts with PCNA and the interaction involves RFC1.

It is found in the nucleus. In terms of biological role, subunit of the replication factor C (RFC) complex which acts during elongation of primed DNA templates by DNA polymerases delta and epsilon, and is necessary for ATP-dependent loading of proliferating cell nuclear antigen (PCNA) onto primed DNA. This subunit binds to the primer-template junction. Binds the PO-B transcription element as well as other GA rich DNA sequences. Can bind single- or double-stranded DNA. This chain is Replication factor C subunit 1 (Rfc1), found in Mus musculus (Mouse).